Reading from the N-terminus, the 693-residue chain is MSTPFGLDLGNNNSVLAVARNRGIDIVVNEVSNRSTPSVVGFGPKNRYLGETGKNKQTSNIKNTVANLKRIIGLDYHHPDFEQESKHFTSKLVELDDKKTGAEVRFAGEKHVFSATQLAAMFIDKVKDTVKQDTKANITDVCIAVPPWYTEEQRYNIADAARIAGLNPVRIVNDVTAAGVSYGIFKTDLPEGEEKPRIVAFVDIGHSSYTCSIMAFKKGQLKVLGTACDKHFGGRDFDLAITEHFADEFKTKYKIDIRENPKAYNRILTAAEKLKKVLSANTNAPFSVESVMNDVDVSSQLSREELEELVKPLLERVTEPVTKALAQAKLSAEEVDFVEIIGGTTRIPTLKQSISEAFGKPLSTTLNQDEAIAKGAAFICAIHSPTLRVRPFKFEDIHPYSVSYSWDKQVEDEDHMEVFPAGSSFPSTKLITLNRTGDFSMAASYTDITQLPPNTPEQIANWEITGVQLPEGQDSVPVKLKLRCDPSGLHTIEEAYTIEDIEVEEPIPLPEDAPEDAEQEFKKVTKTVKKDDLTIVAHTFGLDAKKLNELIEKENEMLAQDKLVAETEDRKNTLEEYIYTLRGKLEEEYAPFASDAEKTKLQGMLNKAEEWLYDEGFDSIKAKYIAKYEELASLGNIIRGRYLAKEEEKKQAIRSKQEASQMAAMAEKLAAQRKAEAEKKEEKKDTEGDVDMD.

An N-acetylserine modification is found at serine 2. Residue lysine 195 forms a Glycyl lysine isopeptide (Lys-Gly) (interchain with G-Cter in ubiquitin) linkage. Threonine 242 carries the post-translational modification Phosphothreonine. The interval 653–693 (IRSKQEASQMAAMAEKLAAQRKAEAEKKEEKKDTEGDVDMD) is disordered. Residue serine 660 is modified to Phosphoserine. Basic and acidic residues predominate over residues 673–687 (RKAEAEKKEEKKDTE).

The protein belongs to the heat shock protein 70 family.

The protein localises to the cytoplasm. Its function is as follows. Has a calcium-dependent calmodulin-binding activity. Required for normal growth at various temperatures. The polypeptide is Heat shock protein homolog SSE1 (SSE1) (Saccharomyces cerevisiae (strain ATCC 204508 / S288c) (Baker's yeast)).